Consider the following 483-residue polypeptide: Malonate-semialdehyde dehydrogenase 2 (483 aa).

Phe-152, Lys-176, Glu-179, Arg-180, and Ser-229 together coordinate NAD(+). Cys-284 (nucleophile) is an active-site residue. An NAD(+)-binding site is contributed by Glu-384.

It belongs to the aldehyde dehydrogenase family. IolA subfamily. As to quaternary structure, homotetramer.

It catalyses the reaction 3-oxopropanoate + NAD(+) + CoA + H2O = hydrogencarbonate + acetyl-CoA + NADH + H(+). It carries out the reaction 2-methyl-3-oxopropanoate + NAD(+) + CoA + H2O = propanoyl-CoA + hydrogencarbonate + NADH + H(+). It functions in the pathway polyol metabolism; myo-inositol degradation into acetyl-CoA; acetyl-CoA from myo-inositol: step 7/7. Catalyzes the oxidation of malonate semialdehyde (MSA) and methylmalonate semialdehyde (MMSA) into acetyl-CoA and propanoyl-CoA, respectively. Is involved in a myo-inositol catabolic pathway. Bicarbonate, and not CO2, is the end-product of the enzymatic reaction. In Bacillus mycoides (strain KBAB4) (Bacillus weihenstephanensis), this protein is Malonate-semialdehyde dehydrogenase 2.